The sequence spans 421 residues: MTVETTAEFDVREAVHEAARRARVASRALAQLTTAQKNDALHAAADTLLAAADTVLAANAEDIAAAEAAGTEASLLDRLRLTKARIDGIASGLRQVAGLPDPVGGVVRGSTLPNGLEIRQVRVPLGVVGMVYEARPNVTVDAFGLALKSGNAALLRGSSSAAKSNAALVEILREALRAQQIPADAVQLLPSHDRSSVTHLIQARGLVDVVIPRGGAGLINAVVRDAIVPTIETGTGNCHVYVHAAADLDMAEQILINAKTRRPSVCNAAETVLIDRAVADTAVPRLTAALREHGVTIHGDLPGLVPATDTDWGEEYLTLDIALKVVDNLDAAVEHINTWGTGHTEAIVTGDLAAAREFTSRVDAAAVMVNASTAFTDGEQFGFGAEIGISTQKLHARGPMALPELTSTKWIVWGEGQIRPV.

It belongs to the gamma-glutamyl phosphate reductase family.

The protein resides in the cytoplasm. The catalysed reaction is L-glutamate 5-semialdehyde + phosphate + NADP(+) = L-glutamyl 5-phosphate + NADPH + H(+). The protein operates within amino-acid biosynthesis; L-proline biosynthesis; L-glutamate 5-semialdehyde from L-glutamate: step 2/2. In terms of biological role, catalyzes the NADPH-dependent reduction of L-glutamate 5-phosphate into L-glutamate 5-semialdehyde and phosphate. The product spontaneously undergoes cyclization to form 1-pyrroline-5-carboxylate. The protein is Gamma-glutamyl phosphate reductase of Nocardia farcinica (strain IFM 10152).